The sequence spans 124 residues: Small ribosomal subunit protein uS12 (124 aa).

D89 is modified (3-methylthioaspartic acid). Positions 105–124 (QGVKNRKQARSRYGAKKEKS) are disordered. The span at 108-118 (KNRKQARSRYG) shows a compositional bias: basic residues.

It belongs to the universal ribosomal protein uS12 family. As to quaternary structure, part of the 30S ribosomal subunit. Contacts proteins S8 and S17. May interact with IF1 in the 30S initiation complex.

In terms of biological role, with S4 and S5 plays an important role in translational accuracy. Its function is as follows. Interacts with and stabilizes bases of the 16S rRNA that are involved in tRNA selection in the A site and with the mRNA backbone. Located at the interface of the 30S and 50S subunits, it traverses the body of the 30S subunit contacting proteins on the other side and probably holding the rRNA structure together. The combined cluster of proteins S8, S12 and S17 appears to hold together the shoulder and platform of the 30S subunit. The polypeptide is Small ribosomal subunit protein uS12 (Mycobacterium leprae (strain Br4923)).